The sequence spans 78 residues: Protein Class8-like (78 aa).

The first 19 residues, 1–19, serve as a signal peptide directing secretion; the sequence is MRTLVVLLIGAVLLCSANA. A propeptide spanning residues 20 to 36 is cleaved from the precursor; that stretch reads FLDELLAESVNDMTDKR. Positions 38-78 constitute a ShKT domain; sequence CFDKYKSNICGGVISPAHCVRRSGRMAKFAKENCAHFCGFC. 3 disulfides stabilise this stretch: Cys38/Cys78, Cys47/Cys71, and Cys56/Cys75.

As to expression, expressed in ganglion neurons residing in the mesoglea (observed in both planulae and primary polyps). Not expressed in nematocytes.

Probable neuropeptide. This Nematostella vectensis (Starlet sea anemone) protein is Protein Class8-like.